Here is a 376-residue protein sequence, read N- to C-terminus: Succinyl-diaminopimelate desuccinylase (376 aa).

His-67 lines the Zn(2+) pocket. Asp-69 is a catalytic residue. Residue Asp-100 coordinates Zn(2+). The active-site Proton acceptor is the Glu-134. Zn(2+) contacts are provided by Glu-135, Glu-163, and His-349.

The protein belongs to the peptidase M20A family. DapE subfamily. As to quaternary structure, homodimer. Zn(2+) is required as a cofactor. Co(2+) serves as cofactor.

The catalysed reaction is N-succinyl-(2S,6S)-2,6-diaminopimelate + H2O = (2S,6S)-2,6-diaminopimelate + succinate. It participates in amino-acid biosynthesis; L-lysine biosynthesis via DAP pathway; LL-2,6-diaminopimelate from (S)-tetrahydrodipicolinate (succinylase route): step 3/3. Functionally, catalyzes the hydrolysis of N-succinyl-L,L-diaminopimelic acid (SDAP), forming succinate and LL-2,6-diaminopimelate (DAP), an intermediate involved in the bacterial biosynthesis of lysine and meso-diaminopimelic acid, an essential component of bacterial cell walls. This Shewanella denitrificans (strain OS217 / ATCC BAA-1090 / DSM 15013) protein is Succinyl-diaminopimelate desuccinylase.